A 139-amino-acid polypeptide reads, in one-letter code: Aspartate 1-decarboxylase (139 aa).

Serine 25 (schiff-base intermediate with substrate; via pyruvic acid) is an active-site residue. At serine 25 the chain carries Pyruvic acid (Ser). Threonine 57 serves as a coordination point for substrate. Residue tyrosine 58 is the Proton donor of the active site. Residue 73–75 (GAA) coordinates substrate. The disordered stretch occupies residues 117–139 (LGADPAEPVPGSDQARSPQAVTA). A compositionally biased stretch (polar residues) spans 130–139 (QARSPQAVTA).

This sequence belongs to the PanD family. Heterooctamer of four alpha and four beta subunits. Pyruvate is required as a cofactor. In terms of processing, is synthesized initially as an inactive proenzyme, which is activated by self-cleavage at a specific serine bond to produce a beta-subunit with a hydroxyl group at its C-terminus and an alpha-subunit with a pyruvoyl group at its N-terminus.

It localises to the cytoplasm. It catalyses the reaction L-aspartate + H(+) = beta-alanine + CO2. Its pathway is cofactor biosynthesis; (R)-pantothenate biosynthesis; beta-alanine from L-aspartate: step 1/1. Functionally, catalyzes the pyruvoyl-dependent decarboxylation of aspartate to produce beta-alanine. This is Aspartate 1-decarboxylase from Streptomyces avermitilis (strain ATCC 31267 / DSM 46492 / JCM 5070 / NBRC 14893 / NCIMB 12804 / NRRL 8165 / MA-4680).